The following is a 93-amino-acid chain: UPF0223 protein YfdD (93 aa).

The protein belongs to the UPF0223 family.

This chain is UPF0223 protein YfdD (yfdD), found in Lactococcus lactis subsp. lactis (strain IL1403) (Streptococcus lactis).